The chain runs to 35 residues: Photosystem II reaction center protein T (35 aa).

A helical membrane pass occupies residues 3–23 (ALVYTFLLVSTLGIIFFAIFF).

This sequence belongs to the PsbT family. As to quaternary structure, PSII is composed of 1 copy each of membrane proteins PsbA, PsbB, PsbC, PsbD, PsbE, PsbF, PsbH, PsbI, PsbJ, PsbK, PsbL, PsbM, PsbT, PsbY, PsbZ, Psb30/Ycf12, at least 3 peripheral proteins of the oxygen-evolving complex and a large number of cofactors. It forms dimeric complexes.

The protein localises to the plastid. Its subcellular location is the chloroplast thylakoid membrane. In terms of biological role, found at the monomer-monomer interface of the photosystem II (PS II) dimer, plays a role in assembly and dimerization of PSII. PSII is a light-driven water plastoquinone oxidoreductase, using light energy to abstract electrons from H(2)O, generating a proton gradient subsequently used for ATP formation. In Schisandra chinensis (Chinese magnolia vine), this protein is Photosystem II reaction center protein T.